The following is a 272-amino-acid chain: Cytochrome b-c1 complex subunit Rieske, mitochondrial (272 aa).

The Mitochondrial matrix portion of the chain corresponds to 77–104 (VHNDVTVPDFSAYRREDVMDATTSSQTS). Residues 105 to 138 (SEDRKGFSYLVTATACVATAYAAKNVVTQFISSL) form a helical membrane-spanning segment. The Mitochondrial intermembrane segment spans residues 139 to 272 (SASADVLALS…FVGDDLVVVG (134 aa)). The Rieske domain maps to 185–270 (EAEVDVSKLR…YQFVGDDLVV (86 aa)). Cys215, His217, Leu218, Cys234, His237, and Ser239 together coordinate [2Fe-2S] cluster. Cys220 and Cys236 are disulfide-bonded.

Belongs to the Rieske iron-sulfur protein family. In terms of assembly, component of the ubiquinol-cytochrome c oxidoreductase (cytochrome b-c1 complex, complex III, CIII), a multisubunit enzyme composed of 11 subunits. The complex is composed of 3 respiratory subunits cytochrome b, cytochrome c1 and Rieske protein UQCRFS1, 2 core protein subunits UQCRC1/QCR1 and UQCRC2/QCR2, and 6 low-molecular weight protein subunits UQCRH/QCR6, UQCRB/QCR7, UQCRQ/QCR8, UQCR10/QCR9, UQCR11/QCR10 and subunit 9, the cleavage product of Rieske protein UQCRFS1. The complex exists as an obligatory dimer and forms supercomplexes (SCs) in the inner mitochondrial membrane with NADH-ubiquinone oxidoreductase (complex I, CI) and cytochrome c oxidase (complex IV, CIV), resulting in different assemblies (supercomplex SCI(1)III(2)IV(1) and megacomplex MCI(2)III(2)IV(2)). Incorporation of the Rieske protein UQCRFS1 is the penultimate step in complex III assembly. Interacts with TTC19, which is involved in the clearance of UQCRFS1 fragments. Component of the ubiquinol-cytochrome c oxidoreductase (cytochrome b-c1 complex, complex III, CIII). Subunit 9 corresponds to the mitochondrial targeting sequence (MTS) of Rieske protein UQCRFS1. It is retained after processing and incorporated inside complex III, where it remains bound to the complex and localizes between the 2 core subunits UQCRC1/QCR1 and UQCRC2/QCR2. It depends on [2Fe-2S] cluster as a cofactor. Post-translationally, proteolytic processing is necessary for the correct insertion of UQCRFS1 in the complex III dimer. Several fragments are generated during UQCRFS1 insertion, most probably due to the endogenous matrix-processing peptidase (MPP) activity of the 2 core protein subunits UQCRC1/QCR1 and UQCRC2/QCR2, which are homologous to the 2 mitochondrial-processing peptidase (MPP) subunits beta-MPP and alpha-MPP respectively. The action of the protease is also necessary for the clearance of the UQCRFS1 fragments.

It is found in the mitochondrion inner membrane. It catalyses the reaction a quinol + 2 Fe(III)-[cytochrome c](out) = a quinone + 2 Fe(II)-[cytochrome c](out) + 2 H(+)(out). In terms of biological role, component of the ubiquinol-cytochrome c oxidoreductase, a multisubunit transmembrane complex that is part of the mitochondrial electron transport chain which drives oxidative phosphorylation. The respiratory chain contains 3 multisubunit complexes succinate dehydrogenase (complex II, CII), ubiquinol-cytochrome c oxidoreductase (cytochrome b-c1 complex, complex III, CIII) and cytochrome c oxidase (complex IV, CIV), that cooperate to transfer electrons derived from NADH and succinate to molecular oxygen, creating an electrochemical gradient over the inner membrane that drives transmembrane transport and the ATP synthase. The cytochrome b-c1 complex catalyzes electron transfer from ubiquinol to cytochrome c, linking this redox reaction to translocation of protons across the mitochondrial inner membrane, with protons being carried across the membrane as hydrogens on the quinol. In the process called Q cycle, 2 protons are consumed from the matrix, 4 protons are released into the intermembrane space and 2 electrons are passed to cytochrome c. The Rieske protein is a catalytic core subunit containing a [2Fe-2S] iron-sulfur cluster. It cycles between 2 conformational states during catalysis to transfer electrons from the quinol bound in the Q(0) site in cytochrome b to cytochrome c1. Incorporation of UQCRFS1 is the penultimate step in complex III assembly. Its function is as follows. Component of the ubiquinol-cytochrome c oxidoreductase (cytochrome b-c1 complex, complex III, CIII). UQCRFS1 undergoes proteolytic processing once it is incorporated in the complex III dimer. One of the fragments, called subunit 9, corresponds to its mitochondrial targeting sequence (MTS). The proteolytic processing is necessary for the correct insertion of UQCRFS1 in the complex III dimer, but the persistence of UQCRFS1-derived fragments may prevent newly imported UQCRFS1 to be processed and assembled into complex III and is detrimental for the complex III structure and function. The polypeptide is Cytochrome b-c1 complex subunit Rieske, mitochondrial (UQCRFS1) (Gallus gallus (Chicken)).